The sequence spans 130 residues: Small ribosomal subunit protein uS8 (130 aa).

The protein belongs to the universal ribosomal protein uS8 family. As to quaternary structure, part of the 30S ribosomal subunit. Contacts proteins S5 and S12.

Its function is as follows. One of the primary rRNA binding proteins, it binds directly to 16S rRNA central domain where it helps coordinate assembly of the platform of the 30S subunit. The chain is Small ribosomal subunit protein uS8 from Pseudomonas fluorescens (strain ATCC BAA-477 / NRRL B-23932 / Pf-5).